Here is a 334-residue protein sequence, read N- to C-terminus: Ornithine carbamoyltransferase subunit I (334 aa).

Residues 56–59 (STRT), Gln-83, Arg-107, and 134–137 (HPTQ) each bind carbamoyl phosphate. L-ornithine is bound by residues Asn-168, Asp-232, and 236 to 237 (SM). Cys-274 contributes to the Zn(2+) binding site. Carbamoyl phosphate is bound by residues 274-275 (CL) and Arg-320.

Belongs to the aspartate/ornithine carbamoyltransferase superfamily. OTCase family. As to quaternary structure, in E.coli strain K12, trimer of identical or non-identical chains are composed of ArgI (I) and/or ArgF (F). The trimer has the following composition: FFI, FFF, FII, III. E.coli strains B and W, which are known to contain only ArgI, produce only a trimer of identical chains (III).

The protein localises to the cytoplasm. The enzyme catalyses carbamoyl phosphate + L-ornithine = L-citrulline + phosphate + H(+). Its pathway is amino-acid biosynthesis; L-arginine biosynthesis; L-arginine from L-ornithine and carbamoyl phosphate: step 1/3. With respect to regulation, reversely inhibited by N-(N-Sulfodiaminophosphinyl)-L-ornithine. Zinc is an allosteric regulator of the substrate-bound enzyme and a competitive inhibitor of the free enzyme. Functionally, reversibly catalyzes the transfer of the carbamoyl group from carbamoyl phosphate (CP) to the N(epsilon) atom of ornithine (ORN) to produce L-citrulline, which is a substrate for argininosuccinate synthetase, the enzyme involved in the final step in arginine biosynthesis. The protein is Ornithine carbamoyltransferase subunit I of Escherichia coli (strain K12).